A 162-amino-acid polypeptide reads, in one-letter code: NADH-quinone oxidoreductase subunit I (162 aa).

4Fe-4S ferredoxin-type domains are found at residues 52–82 (LRRYPNGEERCIACKLCEAICPAQAITIEAG) and 93–122 (TRYDIDMVKCIYCGFCQEACPVDAIVEGPN). Residues C62, C65, C68, C72, C102, C105, C108, and C112 each coordinate [4Fe-4S] cluster.

This sequence belongs to the complex I 23 kDa subunit family. NDH-1 is composed of 14 different subunits. Subunits NuoA, H, J, K, L, M, N constitute the membrane sector of the complex. The cofactor is [4Fe-4S] cluster.

The protein localises to the cell inner membrane. The catalysed reaction is a quinone + NADH + 5 H(+)(in) = a quinol + NAD(+) + 4 H(+)(out). In terms of biological role, NDH-1 shuttles electrons from NADH, via FMN and iron-sulfur (Fe-S) centers, to quinones in the respiratory chain. The immediate electron acceptor for the enzyme in this species is believed to be ubiquinone. Couples the redox reaction to proton translocation (for every two electrons transferred, four hydrogen ions are translocated across the cytoplasmic membrane), and thus conserves the redox energy in a proton gradient. This is NADH-quinone oxidoreductase subunit I from Methylocella silvestris (strain DSM 15510 / CIP 108128 / LMG 27833 / NCIMB 13906 / BL2).